The sequence spans 54 residues: ATP synthase protein 8 (54 aa).

A helical membrane pass occupies residues 13-32; that stretch reads ITFTFVIITLMVYILSKYIL.

Belongs to the ATPase protein 8 family. F-type ATPases have 2 components, CF(1) - the catalytic core - and CF(0) - the membrane proton channel.

Its subcellular location is the mitochondrion membrane. In terms of biological role, mitochondrial membrane ATP synthase (F(1)F(0) ATP synthase or Complex V) produces ATP from ADP in the presence of a proton gradient across the membrane which is generated by electron transport complexes of the respiratory chain. F-type ATPases consist of two structural domains, F(1) - containing the extramembraneous catalytic core and F(0) - containing the membrane proton channel, linked together by a central stalk and a peripheral stalk. During catalysis, ATP synthesis in the catalytic domain of F(1) is coupled via a rotary mechanism of the central stalk subunits to proton translocation. Part of the complex F(0) domain. Minor subunit located with subunit a in the membrane. This Neurospora crassa (strain ATCC 24698 / 74-OR23-1A / CBS 708.71 / DSM 1257 / FGSC 987) protein is ATP synthase protein 8 (atp-8).